A 393-amino-acid chain; its full sequence is uncharacterized protein (393 aa).

Residues 250–389 form the Flavodoxin-like domain; the sequence is AVIVYDTMYN…KCYEFGKRLA (140 aa).

This is an uncharacterized protein from Methanocaldococcus jannaschii (strain ATCC 43067 / DSM 2661 / JAL-1 / JCM 10045 / NBRC 100440) (Methanococcus jannaschii).